Reading from the N-terminus, the 322-residue chain is uncharacterized protein (322 aa).

The protein belongs to the glycosyltransferase 2 family.

This is an uncharacterized protein from Nostoc sp. (strain PCC 7120 / SAG 25.82 / UTEX 2576).